Reading from the N-terminus, the 539-residue chain is Probable glycerol kinase (539 aa).

Residue Thr-12 coordinates substrate. Position 16 (Arg-16) interacts with ATP. The substrate site is built by Arg-86, Tyr-168, and Asp-285. ATP is bound by residues Thr-307, Gly-352, and 453–457; that span reads GMAKN.

Belongs to the FGGY kinase family.

The enzyme catalyses glycerol + ATP = sn-glycerol 3-phosphate + ADP + H(+). It participates in polyol metabolism; glycerol degradation via glycerol kinase pathway; sn-glycerol 3-phosphate from glycerol: step 1/1. The sequence is that of Probable glycerol kinase (gk) from Dictyostelium discoideum (Social amoeba).